A 254-amino-acid chain; its full sequence is Type III pantothenate kinase (254 aa).

6–13 serves as a coordination point for ATP; that stretch reads DVGNTNTV. Substrate is bound by residues Tyr-100 and 107-110; that span reads GADR. Catalysis depends on Asp-109, which acts as the Proton acceptor. Asp-129 lines the K(+) pocket. Thr-132 is a binding site for ATP. Thr-184 is a substrate binding site.

This sequence belongs to the type III pantothenate kinase family. In terms of assembly, homodimer. The cofactor is NH4(+). K(+) is required as a cofactor.

The protein localises to the cytoplasm. It catalyses the reaction (R)-pantothenate + ATP = (R)-4'-phosphopantothenate + ADP + H(+). The protein operates within cofactor biosynthesis; coenzyme A biosynthesis; CoA from (R)-pantothenate: step 1/5. Its function is as follows. Catalyzes the phosphorylation of pantothenate (Pan), the first step in CoA biosynthesis. This chain is Type III pantothenate kinase, found in Syntrophus aciditrophicus (strain SB).